The primary structure comprises 296 residues: MKIAVLLGGISRERPISLKSGENVLKALKKLGHDVVPIDVDENFLEIAPKLKEFEVVFNALHGHFGEDGTVQAILDWVGVSYTGSKVLASAICFDKVMTYRVLDGYVNFPEYTIVKKPVKESPYGFPCVIKPRKEGSSIGVHICDNSNQLYNDLSEELKKYNEMMIQRYIEGRELTVSILEIGKPQILPVLELKPKRRFYDYTAKYVSGMTEFILPAPLSVEEYQKVANSSLRAFELCGCEGFARVDGILKDNVFYVLELNTIPGLTDLSDMPASAKAAGMSFEELVDAIIQTAVR.

The region spanning 99–292 is the ATP-grasp domain; sequence TYRVLDGYVN…FEELVDAIIQ (194 aa). 125–176 provides a ligand contact to ATP; that stretch reads GFPCVIKPRKEGSSIGVHICDNSNQLYNDLSEELKKYNEMMIQRYIEGRELT. 3 residues coordinate Mg(2+): Asp247, Glu259, and Asn261.

Belongs to the D-alanine--D-alanine ligase family. The cofactor is Mg(2+). It depends on Mn(2+) as a cofactor.

Its subcellular location is the cytoplasm. The catalysed reaction is 2 D-alanine + ATP = D-alanyl-D-alanine + ADP + phosphate + H(+). It functions in the pathway cell wall biogenesis; peptidoglycan biosynthesis. In terms of biological role, cell wall formation. The polypeptide is D-alanine--D-alanine ligase (Pseudothermotoga lettingae (strain ATCC BAA-301 / DSM 14385 / NBRC 107922 / TMO) (Thermotoga lettingae)).